Consider the following 891-residue polypeptide: DNA mismatch repair protein MutS (891 aa).

Position 634-641 (634-641) interacts with ATP; the sequence is GPNMGGKS.

The protein belongs to the DNA mismatch repair MutS family.

Functionally, this protein is involved in the repair of mismatches in DNA. It is possible that it carries out the mismatch recognition step. This protein has a weak ATPase activity. In Burkholderia pseudomallei (strain 668), this protein is DNA mismatch repair protein MutS.